The following is a 259-amino-acid chain: 4-hydroxy-tetrahydrodipicolinate reductase (259 aa).

NAD(+) is bound by residues 9-14 and glutamate 35; that span reads GAGGRM. Residue arginine 36 coordinates NADP(+). NAD(+) contacts are provided by residues 92-94 and 116-119; these read GTT and APNM. Residue histidine 149 is the Proton donor/acceptor of the active site. Histidine 150 lines the (S)-2,3,4,5-tetrahydrodipicolinate pocket. The active-site Proton donor is the lysine 153. 159-160 serves as a coordination point for (S)-2,3,4,5-tetrahydrodipicolinate; it reads GT.

It belongs to the DapB family.

It is found in the cytoplasm. The catalysed reaction is (S)-2,3,4,5-tetrahydrodipicolinate + NAD(+) + H2O = (2S,4S)-4-hydroxy-2,3,4,5-tetrahydrodipicolinate + NADH + H(+). It carries out the reaction (S)-2,3,4,5-tetrahydrodipicolinate + NADP(+) + H2O = (2S,4S)-4-hydroxy-2,3,4,5-tetrahydrodipicolinate + NADPH + H(+). It participates in amino-acid biosynthesis; L-lysine biosynthesis via DAP pathway; (S)-tetrahydrodipicolinate from L-aspartate: step 4/4. Catalyzes the conversion of 4-hydroxy-tetrahydrodipicolinate (HTPA) to tetrahydrodipicolinate. In Nitratidesulfovibrio vulgaris (strain DSM 19637 / Miyazaki F) (Desulfovibrio vulgaris), this protein is 4-hydroxy-tetrahydrodipicolinate reductase.